The primary structure comprises 78 residues: Small ribosomal subunit protein bS18 (78 aa).

The protein belongs to the bacterial ribosomal protein bS18 family. Part of the 30S ribosomal subunit. Forms a tight heterodimer with protein bS6.

Functionally, binds as a heterodimer with protein bS6 to the central domain of the 16S rRNA, where it helps stabilize the platform of the 30S subunit. The sequence is that of Small ribosomal subunit protein bS18 from Geobacillus sp. (strain WCH70).